The following is a 263-amino-acid chain: Phosphatidylglycerol--prolipoprotein diacylglyceryl transferase (263 aa).

4 helical membrane-spanning segments follow: residues 6 to 26 (VIFS…VLGI), 50 to 70 (LLTA…VLIY), 85 to 105 (TWEG…AVII), and 112 to 132 (IPIF…LLLG). An a 1,2-diacyl-sn-glycero-3-phospho-(1'-sn-glycerol)-binding site is contributed by Arg133. Helical transmembrane passes span 169–189 (LYEA…LFYL), 197–217 (GATT…VEFF), and 233–253 (MGQL…LGAL).

The protein belongs to the Lgt family.

It localises to the cell membrane. The catalysed reaction is L-cysteinyl-[prolipoprotein] + a 1,2-diacyl-sn-glycero-3-phospho-(1'-sn-glycerol) = an S-1,2-diacyl-sn-glyceryl-L-cysteinyl-[prolipoprotein] + sn-glycerol 1-phosphate + H(+). Its pathway is protein modification; lipoprotein biosynthesis (diacylglyceryl transfer). Catalyzes the transfer of the diacylglyceryl group from phosphatidylglycerol to the sulfhydryl group of the N-terminal cysteine of a prolipoprotein, the first step in the formation of mature lipoproteins. The sequence is that of Phosphatidylglycerol--prolipoprotein diacylglyceryl transferase from Wolbachia pipientis subsp. Culex pipiens (strain wPip).